Reading from the N-terminus, the 210-residue chain is Na(+)-translocating NADH-quinone reductase subunit D (210 aa).

The next 5 helical transmembrane spans lie at 42-62 (FVMT…VSLI), 72-92 (IIVQ…ILKA), 103-123 (VFVG…AFAM), 131-151 (LIDG…VGFF), and 178-198 (NGLM…IWAI).

This sequence belongs to the NqrDE/RnfAE family. As to quaternary structure, composed of six subunits; NqrA, NqrB, NqrC, NqrD, NqrE and NqrF.

Its subcellular location is the cell inner membrane. The enzyme catalyses a ubiquinone + n Na(+)(in) + NADH + H(+) = a ubiquinol + n Na(+)(out) + NAD(+). Functionally, NQR complex catalyzes the reduction of ubiquinone-1 to ubiquinol by two successive reactions, coupled with the transport of Na(+) ions from the cytoplasm to the periplasm. NqrA to NqrE are probably involved in the second step, the conversion of ubisemiquinone to ubiquinol. This Vibrio vulnificus (strain CMCP6) protein is Na(+)-translocating NADH-quinone reductase subunit D.